The sequence spans 457 residues: Argininosuccinate lyase (457 aa).

Belongs to the lyase 1 family. Argininosuccinate lyase subfamily.

It is found in the cytoplasm. It catalyses the reaction 2-(N(omega)-L-arginino)succinate = fumarate + L-arginine. Its pathway is amino-acid biosynthesis; L-arginine biosynthesis; L-arginine from L-ornithine and carbamoyl phosphate: step 3/3. The chain is Argininosuccinate lyase from Sodalis glossinidius (strain morsitans).